The following is a 91-amino-acid chain: Small ribosomal subunit protein bS18 (91 aa).

The protein belongs to the bacterial ribosomal protein bS18 family. Part of the 30S ribosomal subunit. Forms a tight heterodimer with protein bS6.

In terms of biological role, binds as a heterodimer with protein bS6 to the central domain of the 16S rRNA, where it helps stabilize the platform of the 30S subunit. The polypeptide is Small ribosomal subunit protein bS18 (Paraburkholderia phymatum (strain DSM 17167 / CIP 108236 / LMG 21445 / STM815) (Burkholderia phymatum)).